Here is a 208-residue protein sequence, read N- to C-terminus: Cytochrome c oxidase assembly protein CtaG (208 aa).

Topologically, residues 1–19 (MSPPLPQAPQQPAPRRGLG) are cytoplasmic. Residues 20–42 (HDTAVAAVCGLVVALMVGASFAA) form a helical; Signal-anchor for type II membrane protein membrane-spanning segment. Residues 43–208 (VPFYNWFCRT…SEPAPRKGNL (166 aa)) lie on the Periplasmic side of the membrane.

It belongs to the COX11/CtaG family.

It localises to the cell inner membrane. Its function is as follows. Exerts its effect at some terminal stage of cytochrome c oxidase synthesis, probably by being involved in the insertion of the copper B into subunit I. This Rhodopseudomonas palustris (strain TIE-1) protein is Cytochrome c oxidase assembly protein CtaG.